Consider the following 193-residue polypeptide: Leucyl/phenylalanyl-tRNA--protein transferase (193 aa).

The protein belongs to the L/F-transferase family.

It is found in the cytoplasm. The catalysed reaction is N-terminal L-lysyl-[protein] + L-leucyl-tRNA(Leu) = N-terminal L-leucyl-L-lysyl-[protein] + tRNA(Leu) + H(+). The enzyme catalyses N-terminal L-arginyl-[protein] + L-leucyl-tRNA(Leu) = N-terminal L-leucyl-L-arginyl-[protein] + tRNA(Leu) + H(+). It catalyses the reaction L-phenylalanyl-tRNA(Phe) + an N-terminal L-alpha-aminoacyl-[protein] = an N-terminal L-phenylalanyl-L-alpha-aminoacyl-[protein] + tRNA(Phe). In terms of biological role, functions in the N-end rule pathway of protein degradation where it conjugates Leu, Phe and, less efficiently, Met from aminoacyl-tRNAs to the N-termini of proteins containing an N-terminal arginine or lysine. The polypeptide is Leucyl/phenylalanyl-tRNA--protein transferase (Gloeobacter violaceus (strain ATCC 29082 / PCC 7421)).